The sequence spans 767 residues: Protein transport protein Sec23B (767 aa).

Residue A2 is modified to N-acetylalanine. Residues C61, C66, C85, and C88 each contribute to the Zn(2+) site. An N6-acetyllysine modification is found at K564. The Gelsolin-like repeat unit spans residues 634–720; sequence PEPVLLDSSS…EHGGSQARFL (87 aa).

It belongs to the SEC23/SEC24 family. SEC23 subfamily. As to quaternary structure, COPII is composed of at least five proteins: the Sec23/24 complex, the Sec13/31 complex and Sar1. Interacts with SAR1A. In terms of tissue distribution, ubiquitously expressed.

The protein localises to the cytoplasmic vesicle. The protein resides in the COPII-coated vesicle membrane. It localises to the endoplasmic reticulum membrane. It is found in the cytoplasm. Its subcellular location is the cytosol. Its function is as follows. Component of the coat protein complex II (COPII) which promotes the formation of transport vesicles from the endoplasmic reticulum (ER). The coat has two main functions, the physical deformation of the endoplasmic reticulum membrane into vesicles and the selection of cargo molecules for their transport to the Golgi complex. This Homo sapiens (Human) protein is Protein transport protein Sec23B.